We begin with the raw amino-acid sequence, 383 residues long: uncharacterized protein (383 aa).

The helical transmembrane segment at 6–26 threads the bilayer; sequence LFLFSCLYFIGGNLKALVLGI. Residues 131–303 form the ATP-grasp domain; it reads YKKLKNLGFN…LAMVLLNNKY (173 aa).

It localises to the membrane. This is an uncharacterized protein from Methanocaldococcus jannaschii (strain ATCC 43067 / DSM 2661 / JAL-1 / JCM 10045 / NBRC 100440) (Methanococcus jannaschii).